The primary structure comprises 138 residues: uncharacterized protein (138 aa).

A signal peptide spans 1 to 35 (MVAPAARVFLRAVRAALTSTVPDLLCLLARGSPRG).

As to expression, isoform 1 is highly expressed in small intestine, testis and kidney, medium expressed in brain and heart and low expressed in colon; it could not be detected in liver, adrenal gland and pancreas.

It localises to the secreted. This is an uncharacterized protein from Homo sapiens (Human).